A 397-amino-acid polypeptide reads, in one-letter code: Elongation factor Tu (397 aa).

In terms of domain architecture, tr-type G spans 10–207 (KPHVNIGTIG…AVDESIPEPV (198 aa)). The interval 19 to 26 (GHVDHGKT) is G1. Residue 19–26 (GHVDHGKT) participates in GTP binding. Mg(2+) is bound at residue Thr26. The tract at residues 63–67 (GITIN) is G2. Residues 84 to 87 (DAPG) are G3. Residues 84–88 (DAPGH) and 139–142 (NKSD) each bind GTP. The G4 stretch occupies residues 139–142 (NKSD). A G5 region spans residues 177–179 (SGL).

It belongs to the TRAFAC class translation factor GTPase superfamily. Classic translation factor GTPase family. EF-Tu/EF-1A subfamily. As to quaternary structure, monomer.

It is found in the cytoplasm. The enzyme catalyses GTP + H2O = GDP + phosphate + H(+). In terms of biological role, GTP hydrolase that promotes the GTP-dependent binding of aminoacyl-tRNA to the A-site of ribosomes during protein biosynthesis. This chain is Elongation factor Tu, found in Clavibacter michiganensis subsp. michiganensis (strain NCPPB 382).